We begin with the raw amino-acid sequence, 105 residues long: Nitrogen fixation nifHD region GlnB-like protein 1 (105 aa).

This sequence belongs to the P(II) protein family.

In terms of biological role, could be involved in the regulation of nitrogen fixation. The polypeptide is Nitrogen fixation nifHD region GlnB-like protein 1 (glnBA) (Methanothermobacter marburgensis (strain ATCC BAA-927 / DSM 2133 / JCM 14651 / NBRC 100331 / OCM 82 / Marburg) (Methanobacterium thermoautotrophicum)).